Reading from the N-terminus, the 275-residue chain is Echotoxin-2 (275 aa).

The signal sequence occupies residues 1 to 23; that stretch reads MKRNILALVVVVALISQSRPAES. The segment at 23-32 is plays an important role in the hemolytic activity; that stretch reads SAGGTIIATL. The tract at residues 49-67 is N-terminal region; the sequence is ETGASVASAAAAATSSDYS. Residues Gly-123, Ser-141, Pro-143, Tyr-176, and Tyr-177 each coordinate phosphocholine. Residues 141-156 are trp-rich region, which is important for the binding to lipid membrane; that stretch reads SAPYNFDFYSNWLAVG. A propeptide spanning residues 249–275 is cleaved from the precursor; sequence RAIQQELARRAEEEKQRKRKALDEMLK.

Belongs to the actinoporin family. Sea anemone subfamily. In terms of assembly, octamer or nonamer in membranes. Monomer in the soluble state. As to expression, salivary gland.

It localises to the secreted. Its subcellular location is the nematocyst. The protein localises to the target cell membrane. Functionally, pore-forming protein that forms cations-selective hydrophilic pores of around 1 nm and causes cardiac stimulation and cytolysis. Pore formation is a multi-step process that involves specific recognition of membrane sphingomyelin (but neither cholesterol nor phosphatidylcholine) using aromatic rich region and adjacent phosphocholine (POC) binding site, firm binding to the membrane (mainly driven by hydrophobic interactions) accompanied by the transfer of the N-terminal region to the lipid-water interface and finally pore formation after oligomerization of monomers. Exhibits both hemolytic and lethal activities. Gangliosides potently inhibits the hemolytic activity. The protein is Echotoxin-2 of Monoplex parthenopeus (Giant triton).